A 179-amino-acid chain; its full sequence is Methylated-DNA--protein-cysteine methyltransferase (179 aa).

Cysteine 130 serves as the catalytic Nucleophile; methyl group acceptor.

It belongs to the MGMT family.

Its subcellular location is the cytoplasm. The enzyme catalyses a 6-O-methyl-2'-deoxyguanosine in DNA + L-cysteinyl-[protein] = S-methyl-L-cysteinyl-[protein] + a 2'-deoxyguanosine in DNA. The catalysed reaction is a 4-O-methyl-thymidine in DNA + L-cysteinyl-[protein] = a thymidine in DNA + S-methyl-L-cysteinyl-[protein]. Involved in the cellular defense against the biological effects of O6-methylguanine (O6-MeG) and O4-methylthymine (O4-MeT) in DNA. Repairs the methylated nucleobase in DNA by stoichiometrically transferring the methyl group to a cysteine residue in the enzyme. This is a suicide reaction: the enzyme is irreversibly inactivated. The chain is Methylated-DNA--protein-cysteine methyltransferase from Haemophilus influenzae (strain ATCC 51907 / DSM 11121 / KW20 / Rd).